Consider the following 358-residue polypeptide: E3 ubiquitin-protein ligase RNF146 (358 aa).

An RING-type zinc finger spans residues 36-74 (CAICLQTCVHPVSLPCKHVFCYLCVKGASWLGKRCALCR). Residues K84 and K94 each participate in a glycyl lysine isopeptide (Lys-Gly) (interchain with G-Cter in ubiquitin) cross-link. The region spanning 91-167 (EELKAASRGN…EHGRRRKIKR (77 aa)) is the WWE domain. Residues Y107, R110, and W114 each contribute to the a glycoprotein site. K130 participates in a covalent cross-link: Glycyl lysine isopeptide (Lys-Gly) (interchain with G-Cter in ubiquitin). A glycoprotein contacts are provided by Y144, Q153, R163, and K175. Residue K175 forms a Glycyl lysine isopeptide (Lys-Gly) (interchain with G-Cter in ubiquitin) linkage. The tract at residues 253–358 (GDNTAERSHR…PDGQCTVTEV (106 aa)) is disordered. A compositionally biased stretch (acidic residues) spans 283-297 (SIEETESDASSDSED). Phosphoserine occurs at positions 289 and 293. The segment covering 305 to 322 (HSLTQQRLLVSNANQTVP) has biased composition (polar residues).

As to quaternary structure, can form homooligomers. Interacts with PARsylated AXIN1, AXIN2, BLZF1, CASC3, H1-2, IPO7, LIG3, NCL, PARP1, XRCC1, XRCC5 and XRCC6. Interacts with DDB1, DHX15, IQGAP1, LRPPRC, PARP2, PRKDC, RUVBL2, TNKS1 and TNKS2. Binding often leads to interactor ubiquitination, in the presence of the appropriate E1 and E2 enzymes, and proteasomal degradation. In terms of processing, ubiquitinated; autoubiquitinated. Autoubiquitination is enhanced upon poly(ADP-ribose)-binding.

It is found in the cytoplasm. It localises to the cytosol. The protein resides in the nucleus. The catalysed reaction is S-ubiquitinyl-[E2 ubiquitin-conjugating enzyme]-L-cysteine + [acceptor protein]-L-lysine = [E2 ubiquitin-conjugating enzyme]-L-cysteine + N(6)-ubiquitinyl-[acceptor protein]-L-lysine.. The protein operates within protein modification; protein ubiquitination. Functionally, E3 ubiquitin-protein ligase that specifically binds poly-ADP-ribosylated (PARsylated) proteins and mediates their ubiquitination and subsequent degradation. May regulate many important biological processes, such as cell survival and DNA damage response. Acts as an activator of the Wnt signaling pathway by mediating the ubiquitination of PARsylated AXIN1 and AXIN2, 2 key components of the beta-catenin destruction complex. Acts in cooperation with tankyrase proteins (TNKS and TNKS2), which mediate PARsylation of target proteins AXIN1, AXIN2, BLZF1, CASC3, TNKS and TNKS2. Recognizes and binds tankyrase-dependent PARsylated proteins via its WWE domain and mediates their ubiquitination, leading to their degradation. Different ubiquitin linkage types have been observed: TNKS2 undergoes ubiquitination at 'Lys-48' and 'Lys-63', while AXIN1 is only ubiquitinated at 'Lys-48'. May regulate TNKS and TNKS2 subcellular location, preventing aggregation at a centrosomal location. Neuroprotective protein. Protects the brain against N-methyl-D-aspartate (NMDA) receptor-mediated glutamate excitotoxicity and ischemia, by interfering with PAR-induced cell death, called parthanatos. Prevents nuclear translocation of AIFM1 in a PAR-binding dependent manner. Does not affect PARP1 activation. Protects against cell death induced by DNA damaging agents, such as N-methyl-N-nitro-N-nitrosoguanidine (MNNG) and rescues cells from G1 arrest. Promotes cell survival after gamma-irradiation. Facilitates DNA repair. The protein is E3 ubiquitin-protein ligase RNF146 (RNF146) of Pongo abelii (Sumatran orangutan).